The chain runs to 348 residues: tRNA N6-adenosine threonylcarbamoyltransferase (348 aa).

Fe cation-binding residues include His-115 and His-119. Residues 138 to 142 (LVSGG), Asp-171, Gly-184, and Asn-278 each bind substrate. Asp-306 is a binding site for Fe cation.

It belongs to the KAE1 / TsaD family. It depends on Fe(2+) as a cofactor.

It localises to the cytoplasm. The catalysed reaction is L-threonylcarbamoyladenylate + adenosine(37) in tRNA = N(6)-L-threonylcarbamoyladenosine(37) in tRNA + AMP + H(+). Functionally, required for the formation of a threonylcarbamoyl group on adenosine at position 37 (t(6)A37) in tRNAs that read codons beginning with adenine. Is involved in the transfer of the threonylcarbamoyl moiety of threonylcarbamoyl-AMP (TC-AMP) to the N6 group of A37, together with TsaE and TsaB. TsaD likely plays a direct catalytic role in this reaction. This chain is tRNA N6-adenosine threonylcarbamoyltransferase, found in Methylibium petroleiphilum (strain ATCC BAA-1232 / LMG 22953 / PM1).